A 137-amino-acid chain; its full sequence is Large ribosomal subunit protein uL16 (137 aa).

Belongs to the universal ribosomal protein uL16 family. As to quaternary structure, part of the 50S ribosomal subunit.

In terms of biological role, binds 23S rRNA and is also seen to make contacts with the A and possibly P site tRNAs. The polypeptide is Large ribosomal subunit protein uL16 (Rhizobium rhizogenes (strain K84 / ATCC BAA-868) (Agrobacterium radiobacter)).